The chain runs to 213 residues: C-type lectin domain family 4 member C (213 aa).

Residues 1–21 (MVPEEEPQDREKGLWWFQLKV) lie on the Cytoplasmic side of the membrane. Residues 22-44 (WSMAVVSILLLSVCFTVSSVVPH) form a helical; Signal-anchor for type II membrane protein membrane-spanning segment. Residues 45–213 (NFMYSKTVKR…SICKMKKIYI (169 aa)) lie on the Extracellular side of the membrane. Intrachain disulfides connect C70/C82 and C83/C94. Positions 90–207 (FQSSCYFIST…CHVPQKSICK (118 aa)) constitute a C-type lectin domain. N-linked (GlcNAc...) asparagine glycans are attached at residues N110 and N137. Disulfide bonds link C111–C206 and C180–C198. S139 lines the a carbohydrate pocket. N-linked (GlcNAc...) asparagine glycosylation occurs at N164. Ca(2+) is bound by residues E172, N174, and E178. A carbohydrate-binding positions include E178, 184 to 186 (NFR), N194, 194 to 195 (ND), and Q202. Residues N194 and D195 each contribute to the Ca(2+) site.

As to quaternary structure, homodimer. In terms of tissue distribution, expressed in plasmacytoid dendritic cells (PDCs). Constitutively expressed in immature monocyte-derived dendritic cells (iMDDC) and is significantly down-regulated upon maturation with LPS but not with TNF-alpha.

The protein localises to the cell membrane. Its function is as follows. Lectin-type cell surface receptor which may play a role in antigen capturing by dendritic cells. Specifically recognizes non-sialylated galactose-terminated biantennary glycans containing the trisaccharide epitope Gal(beta1-3/4)GlcNAc(beta1-2)Man. Binds to serum IgG. Efficiently targets ligand into antigen-processing and peptide-loading compartments for presentation to T-cells. May mediate potent inhibition of induction of IFN-alpha/beta expression in plasmacytoid dendritic cells. May act as a signaling receptor that activates protein-tyrosine kinases and mobilizes intracellular calcium. This is C-type lectin domain family 4 member C (CLEC4C) from Homo sapiens (Human).